Consider the following 318-residue polypeptide: Acetyl-coenzyme A carboxylase carboxyl transferase subunit alpha (318 aa).

A CoA carboxyltransferase C-terminal domain is found at 38 to 292 (KLEKRLAKLE…NKTITKSLHA (255 aa)).

It belongs to the AccA family. In terms of assembly, acetyl-CoA carboxylase is a heterohexamer composed of biotin carboxyl carrier protein (AccB), biotin carboxylase (AccC) and two subunits each of ACCase subunit alpha (AccA) and ACCase subunit beta (AccD).

It localises to the cytoplasm. The enzyme catalyses N(6)-carboxybiotinyl-L-lysyl-[protein] + acetyl-CoA = N(6)-biotinyl-L-lysyl-[protein] + malonyl-CoA. It functions in the pathway lipid metabolism; malonyl-CoA biosynthesis; malonyl-CoA from acetyl-CoA: step 1/1. Component of the acetyl coenzyme A carboxylase (ACC) complex. First, biotin carboxylase catalyzes the carboxylation of biotin on its carrier protein (BCCP) and then the CO(2) group is transferred by the carboxyltransferase to acetyl-CoA to form malonyl-CoA. In Listeria welshimeri serovar 6b (strain ATCC 35897 / DSM 20650 / CCUG 15529 / CIP 8149 / NCTC 11857 / SLCC 5334 / V8), this protein is Acetyl-coenzyme A carboxylase carboxyl transferase subunit alpha.